We begin with the raw amino-acid sequence, 650 residues long: Probable ATP-dependent RNA helicase DDX17 (650 aa).

The disordered stretch occupies residues 1–38 (MRGGGFGDRDRDRDRGGFGARGGSGLPPKKFGNPGERL). The span at 7–16 (GDRDRDRDRG) shows a compositional bias: basic and acidic residues. Lysine 29, lysine 30, and lysine 42 each carry N6-acetyllysine. Lysine 50 participates in a covalent cross-link: Glycyl lysine isopeptide (Lys-Gly) (interchain with G-Cter in SUMO); alternate. A Glycyl lysine isopeptide (Lys-Gly) (interchain with G-Cter in SUMO1); alternate cross-link involves residue lysine 50. A Glycyl lysine isopeptide (Lys-Gly) (interchain with G-Cter in SUMO2); alternate cross-link involves residue lysine 50. Residues 92–120 (FAFHHANFPQYVMDVLMDQHFTEPTPIQC) carry the Q motif motif. The Helicase ATP-binding domain maps to 123-298 (FPLALSGRDM…EDFLRDYTQI (176 aa)). Residue 136–143 (AQTGSGKT) participates in ATP binding. The DEAD box motif lies at 246 to 249 (DEAD). The Helicase C-terminal domain occupies 326–473 (KLIQLMEEIM…AINPKLMQLV (148 aa)). Threonine 444 is modified (phosphothreonine). A Glycyl lysine isopeptide (Lys-Gly) (interchain with G-Cter in SUMO2) cross-link involves residue lysine 449. Residues 468 to 650 (KLMQLVDHRG…PPPPPPPSRK (183 aa)) are transactivation domain. Disordered regions lie at residues 472–543 (LVDH…YGSP) and 583–650 (ASST…PSRK). The span at 489–499 (RTTSSANNPNL) shows a compositional bias: polar residues. Over residues 504-531 (ECDRRLRGVKDGGRRDSTSYRDRSETDR) the composition is skewed to basic and acidic residues. The segment covering 583 to 609 (ASSTASAGRSSQSSSQQFSGIGRSGQQ) has biased composition (low complexity). Position 605 is an omega-N-methylarginine (arginine 605). The segment covering 610–619 (PQPLMSQQFA) has biased composition (polar residues). The segment covering 638 to 650 (YPPPPPPPPPSRK) has biased composition (pro residues). Positions 639–647 (PPPPPPPPP) are interaction with YAP1.

This sequence belongs to the DEAD box helicase family. DDX5/DBP2 subfamily. Interacts with DDX5 in an RNA-independent manner. Interacts with CDK9 transcription elongation complex under basal conditions. Following cell stimulation with poly(I:C), a synthetic double-stranded RNA mimicking viral infection, the interaction with CDK9 is decreased. Interacts with ESR1 in an estrogen-independent manner. Interacts with HNRNPH1; this interaction is important for the regulation of alternative splicing on G-quadruplex structures. At high, but not low, cell density, interacts with DROSHA and DGCR8, the core components of the microprocessor complex involved in the maturation of primary microRNAs (pri-miRNAs) into pre-miRNAs. The interaction with DGCR8 is reduced during mitosis. At low, but not high, cell density, interacts with YAP1 and with its paralog, WWTR1/TAZ. Interactions with DROSHA and YAP1 are mutually exclusive. In vitro, the pre-miRNA processing activity of the DDX17-containing microprocessor complex is weaker than that of the DROSHA/DGCR8 microprocessor complex. Interacts with UPF3B. Interacts with NFAT5; this interaction leads to DDX17 recruitment to LNC2 and S100A4 promoters and NFAT5-mediated DDX17-enhanced transactivation. Interacts with HDAC1, HDAC2 and HDAC3; this interaction with HDAC1 and HDAC3, but not HDAC2, depends upon DDX17 acetylation. Interacts with ZC3HAV1 (via N-terminal domain) in an RNA-independent manner. Interacts with EXOSC3/RRP40 and EXOSC5/RRP46; this interaction may be indirect and mediated by ZC3HAV1-binding. Interacts with EP300; this interaction leads to acetylation at lysine residues. Interacts with CREBBP/CBP and KAT2B/P/CAF. Directly interacts with CTNNB1. Interacts with MYOD1. Interacts with TP53. Interacts with DCP1A in an RNA-independent manner. Interacts with DCP2 in an RNA-dependent manner. Interacts with DHX36; this interaction occurs in a RNA-dependent manner. Interacts with ERCC6. Post-translationally, sumoylation significantly increases stability. It also promotes interaction specifically with HDAC1 (but not HDAC2, nor HDAC3) and strongly stimulates ESR1 and TP53 coactivation. In terms of processing, acetylation at lysine residues stabilizes the protein, stimulates interaction with HDAC1 and HDAC3, but not HDAC2, and represses ESR1 and TP53 coactivation activity.

Its subcellular location is the nucleus. It localises to the nucleolus. The protein resides in the cytoplasm. It is found in the cytosol. It catalyses the reaction ATP + H2O = ADP + phosphate + H(+). Functionally, as an RNA helicase, unwinds RNA and alters RNA structures through ATP binding and hydrolysis. Involved in multiple cellular processes, including pre-mRNA splicing, alternative splicing, ribosomal RNA processing and miRNA processing, as well as transcription regulation. Regulates the alternative splicing of exons exhibiting specific features. This function requires the RNA helicase activity. Affects NFAT5 and histone macro-H2A.1/MACROH2A1 alternative splicing in a CDK9-dependent manner. Affects splicing of mediators of steroid hormone signaling pathway, including kinases that phosphorylates ESR1 and transcriptional regulators. By acting splicing of regulatory factors, participates in ESR1 and AR stabilization. Promotes the inclusion of specific AC-rich alternative exons in CD44 transcripts. In myoblasts and epithelial cells, cooperates with HNRNPH1 to control the splicing of specific subsets of exons. In addition to binding mature mRNAs, also interacts with certain pri-microRNAs, including MIR132/miR-132, and stabilizes the primary transcript. Also participates in the MIR132 processing, resulting in significantly higher levels of mature MIR132 than MIR212 despite the fact that both are cotranscribed and co-regulated. Binding of pri-microRNAs may occur on the 3' segment flanking the stem loop via the 5'-[ACG]CAUC[ACU]-3' consensus sequence. Participates in MYC down-regulation at high cell density through the production of MYC-targeting microRNAs. Along with DDX5, may be involved in the processing of the 32S intermediate into the mature 28S rRNA. Promoter-specific transcription regulator, functioning as a coactivator or corepressor depending on the context of the promoter and the transcriptional complex in which it exists. Enhances NFAT5 transcriptional activity. Synergizes with TP53 in the activation of the MDM2 promoter; this activity requires acetylation on lysine residues. May also coactivate MDM2 transcription through a TP53-independent pathway. Coactivates MMP7 transcription. Along with CTNNB1, coactivates MYC, JUN, FOSL1 and cyclin D1/CCND1 transcription. Alone or in combination with DDX5 and/or SRA1 non-coding RNA, plays a critical role in promoting the assembly of proteins required for the formation of the transcription initiation complex and chromatin remodeling leading to coactivation of MYOD1-dependent transcription. This helicase-independent activity is required for skeletal muscle cells to properly differentiate into myotubes. During epithelial-to-mesenchymal transition, coregulates SMAD-dependent transcriptional activity, directly controlling key effectors of differentiation, including miRNAs which in turn directly repress its expression. Plays a role in estrogen and testosterone signaling pathway at several levels. Mediates the use of alternative promoters in estrogen-responsive genes and regulates transcription and splicing of a large number of steroid hormone target genes. Contrary to the splicing regulation activity, transcriptional coregulation of the estrogen receptor ESR1 is helicase activity-independent. Plays a role in innate immunity. Specifically restricts bunyavirus infection, including Rift Valley fever virus (RVFV) or La Crosse virus (LACV), but not vesicular stomatitis virus (VSV), in an interferon- and DROSHA-independent manner. Binds to RVFV RNA, likely via structured viral RNA elements. Promotes mRNA degradation mediated by the antiviral zinc-finger protein ZC3HAV1, in an ATPase-dependent manner. The sequence is that of Probable ATP-dependent RNA helicase DDX17 (Ddx17) from Mus musculus (Mouse).